A 340-amino-acid polypeptide reads, in one-letter code: Proline-rich transmembrane protein 2 (340 aa).

A disordered region spans residues M1 to G261. At M1 to Y268 the chain is on the cytoplasmic side. At S28 the chain carries Phosphoserine. T74 is subject to Phosphothreonine. 2 stretches are compositionally biased toward pro residues: residues P131–A155 and A197–K207. S238 carries the phosphoserine modification. At R240 the chain carries Omega-N-methylarginine. Phosphoserine occurs at positions 248 and 249. Positions I269–A289 form an intramembrane region, helical. The Cytoplasmic segment spans residues Y290–S317. A helical membrane pass occupies residues I318–V338. At Y339–K340 the chain is on the extracellular side.

The protein belongs to the CD225/Dispanin family. In terms of assembly, component of the outer core of AMPAR complex. AMPAR complex consists of an inner core made of 4 pore-forming GluA/GRIA proteins (GRIA1, GRIA2, GRIA3 and GRIA4) and 4 major auxiliary subunits arranged in a twofold symmetry. One of the two pairs of distinct binding sites is occupied either by CNIH2, CNIH3 or CACNG2, CACNG3. The other harbors CACNG2, CACNG3, CACNG4, CACNG8 or GSG1L. This inner core of AMPAR complex is complemented by outer core constituents binding directly to the GluA/GRIA proteins at sites distinct from the interaction sites of the inner core constituents. Outer core constituents include at least PRRT1, PRRT2, CKAMP44/SHISA9, FRRS1L and NRN1. The proteins of the inner and outer core serve as a platform for other, more peripherally associated AMPAR constituents. Alone or in combination, these auxiliary subunits control the gating and pharmacology of the AMPAR complex and profoundly impact their biogenesis and protein processing. Interacts with intersectin 1/ITSN1. Interacts with SNARE complex components, including SNAP25, STX1A, SYT1 and SYT2; this interaction may inhibit SNARE complex formation.

Its subcellular location is the cell membrane. The protein resides in the presynaptic cell membrane. It is found in the synapse. The protein localises to the cell projection. It localises to the axon. Its subcellular location is the cytoplasmic vesicle. The protein resides in the secretory vesicle. It is found in the synaptic vesicle membrane. The protein localises to the postsynaptic density membrane. It localises to the dendritic spine. Functionally, as a component of the outer core of AMPAR complex, may be involved in synaptic transmission in the central nervous system. In hippocampal neurons, in presynaptic terminals, plays an important role in the final steps of neurotransmitter release, possibly by regulating Ca(2+)-sensing. In the cerebellum, may inhibit SNARE complex formation and down-regulate short-term facilitation. The protein is Proline-rich transmembrane protein 2 (PRRT2) of Pongo abelii (Sumatran orangutan).